Reading from the N-terminus, the 235-residue chain is Large ribosomal subunit protein uL1 (235 aa).

This sequence belongs to the universal ribosomal protein uL1 family. In terms of assembly, part of the 50S ribosomal subunit.

Binds directly to 23S rRNA. The L1 stalk is quite mobile in the ribosome, and is involved in E site tRNA release. Its function is as follows. Protein L1 is also a translational repressor protein, it controls the translation of the L11 operon by binding to its mRNA. This chain is Large ribosomal subunit protein uL1, found in Mycobacterium bovis (strain ATCC BAA-935 / AF2122/97).